A 197-amino-acid chain; its full sequence is MNGGGKAEKENTPSEANLQEEEVRTLFVSGLPLDIKPRELYLLFRPFKGYEGSLIKLTSKQPVGFVSFDSRSEAEAAKNALNGIRFDPEIPQTLRLEFAKANTKMAKNKLVGTPNPSTPLPNTVPQFIAREPYELTVPALYPSSPEVWAPYPLYPAELAPALPPPAAFTYPASLHAQMRWIPPSEATSQGWKSRQFC.

The residue at position 1 (Met1) is an N-acetylmethionine. Thr12 is modified (phosphothreonine). The 78-residue stretch at 24–101 (RTLFVSGLPL…QTLRLEFAKA (78 aa)) folds into the RRM domain. The interval 98–105 (FAKANTKM) is interaction with RNA. Thr113 carries the post-translational modification Phosphothreonine.

As to quaternary structure, homodimer; each protein chain binds one RNA molecule via the external surface of the homodimer. Interacts with RNA binding proteins MBNL1, RBFOX2, RBM4 and RBM14; the interaction allows cooperative assembly of stable cell-specific alternative splicing regulatory complexes. Also interacts with RBM47, MATR3 and ESRP2. Interacts with SMAD2, SMAD3 and SMAD4; the interactions are direct. MRNA expressed in developing heart, with significantly higher expression in the atria relative to the ventricles.

The protein resides in the nucleus. Its subcellular location is the cytoplasm. It is found in the stress granule. It localises to the P-body. Its function is as follows. RNA binding protein that mediates the regulation of pre-mRNA alternative splicing (AS). Acts either as activator (FLNB, HSPG2, LIPA1, MYOCD, PTPRF and PPFIBP1) or repressor (TPM1, ACTN1, ITGA7, PIEZO1, LSM14B, MBNL1 and MBML2) of splicing events on specific pre-mRNA targets. Together with RNA binding proteins RBFOX2 and MBNL1/2, activates a splicing program associated with differentiated contractile vascular smooth muscle cells (SMC) by regulating AS of numerous pre-mRNA involved in actin cytoskeleton and focal adhesion machineries, suggesting a role in promoting a cell differentiated state. Binds to introns, exons and 3'-UTR associated with tandem CAC trinucleotide motifs separated by a variable spacer region, at a minimum as a dimer. The minimal length of RNA required for RBPMS-binding tandem CAC motifs is 15 nt, with spacing ranging from 1 to 9 nt. Can also bind to CA dinucleotide repeats. Mediates repression of TPM1 exon 3 by binding to CAC tandem repeats in the flanking intronic regions, followed by higher-order oligomerization and heterotypic interactions with other splicing regulators including MBNL1 and RBFOX2, which prevents assembly of ATP-dependent splicing complexes. This is RNA-binding protein with multiple splicing from Mus musculus (Mouse).